Reading from the N-terminus, the 370-residue chain is Putative F-box protein At3g10430 (370 aa).

The F-box domain occupies 1 to 47 (MGSSLPFDLILEILQRTPAESLLRFKSTCKKWYELISNDKRFMYKHL).

The chain is Putative F-box protein At3g10430 from Arabidopsis thaliana (Mouse-ear cress).